The sequence spans 243 residues: GrpE protein homolog, mitochondrial (243 aa).

Residues 56–79 (KKEEPKDENDAAAAEEDANLTEEQ) are disordered.

The protein belongs to the GrpE family. As to quaternary structure, component of the PAM complex, at least composed of mtHsp70, MGE1, TIM44, PAM16, PAM17 and PAM18.

It localises to the mitochondrion matrix. In terms of biological role, essential component of the PAM complex, a complex required for the translocation of transit peptide-containing proteins from the inner membrane into the mitochondrial matrix in an ATP-dependent manner. Seems to control the nucleotide-dependent binding of SSC1 to substrate proteins. The chain is GrpE protein homolog, mitochondrial (mge1) from Kluyveromyces lactis (strain ATCC 8585 / CBS 2359 / DSM 70799 / NBRC 1267 / NRRL Y-1140 / WM37) (Yeast).